The following is a 248-amino-acid chain: Leucyl/phenylalanyl-tRNA--protein transferase (248 aa).

Belongs to the L/F-transferase family.

It is found in the cytoplasm. It carries out the reaction N-terminal L-lysyl-[protein] + L-leucyl-tRNA(Leu) = N-terminal L-leucyl-L-lysyl-[protein] + tRNA(Leu) + H(+). The enzyme catalyses N-terminal L-arginyl-[protein] + L-leucyl-tRNA(Leu) = N-terminal L-leucyl-L-arginyl-[protein] + tRNA(Leu) + H(+). The catalysed reaction is L-phenylalanyl-tRNA(Phe) + an N-terminal L-alpha-aminoacyl-[protein] = an N-terminal L-phenylalanyl-L-alpha-aminoacyl-[protein] + tRNA(Phe). In terms of biological role, functions in the N-end rule pathway of protein degradation where it conjugates Leu, Phe and, less efficiently, Met from aminoacyl-tRNAs to the N-termini of proteins containing an N-terminal arginine or lysine. This is Leucyl/phenylalanyl-tRNA--protein transferase from Ralstonia pickettii (strain 12J).